The following is a 455-amino-acid chain: Putative non-structural protein (455 aa).

Positions 262-276 are enriched in basic and acidic residues; the sequence is KERKTTHKTLVEDTH. The disordered stretch occupies residues 262 to 341; the sequence is KERKTTHKTL…GVLTKKKSLK (80 aa).

The protein is Putative non-structural protein of Bombyx mori (Silk moth).